A 314-amino-acid polypeptide reads, in one-letter code: DNA-directed RNA polymerase subunit alpha (314 aa).

The interval 1 to 228 is alpha N-terminal domain (alpha-NTD); that stretch reads MAQFHYECVE…SLFEPLKDIT (228 aa). The segment at 240-314 is alpha C-terminal domain (alpha-CTD); it reads DPTSQIPIEE…LPQEKVAKAT (75 aa).

Belongs to the RNA polymerase alpha chain family. In cyanobacteria the RNAP catalytic core is composed of 2 alpha, 1 beta, 1 beta', 1 gamma and 1 omega subunit. When a sigma factor is associated with the core the holoenzyme is formed, which can initiate transcription.

It carries out the reaction RNA(n) + a ribonucleoside 5'-triphosphate = RNA(n+1) + diphosphate. In terms of biological role, DNA-dependent RNA polymerase catalyzes the transcription of DNA into RNA using the four ribonucleoside triphosphates as substrates. This chain is DNA-directed RNA polymerase subunit alpha, found in Trichodesmium erythraeum (strain IMS101).